Reading from the N-terminus, the 153-residue chain is Bud site selection protein 25 (153 aa).

Involved in bud site selection. Required for resistance to the DNA-damaging agent methyl methanesulfonate (MMS). The sequence is that of Bud site selection protein 25 from Saccharomyces cerevisiae (strain ATCC 204508 / S288c) (Baker's yeast).